A 261-amino-acid chain; its full sequence is 1-(5-phosphoribosyl)-5-[(5-phosphoribosylamino)methylideneamino] imidazole-4-carboxamide isomerase (261 aa).

The active-site Proton acceptor is the Asp15. Asp136 (proton donor) is an active-site residue.

It belongs to the HisA/HisF family.

Its subcellular location is the cytoplasm. The enzyme catalyses 1-(5-phospho-beta-D-ribosyl)-5-[(5-phospho-beta-D-ribosylamino)methylideneamino]imidazole-4-carboxamide = 5-[(5-phospho-1-deoxy-D-ribulos-1-ylimino)methylamino]-1-(5-phospho-beta-D-ribosyl)imidazole-4-carboxamide. It functions in the pathway amino-acid biosynthesis; L-histidine biosynthesis; L-histidine from 5-phospho-alpha-D-ribose 1-diphosphate: step 4/9. In Synechococcus sp. (strain JA-2-3B'a(2-13)) (Cyanobacteria bacterium Yellowstone B-Prime), this protein is 1-(5-phosphoribosyl)-5-[(5-phosphoribosylamino)methylideneamino] imidazole-4-carboxamide isomerase.